We begin with the raw amino-acid sequence, 396 residues long: MSEYSLFTSESVSEGHPDKIADQISDAVLDAIIAEDKYARVACETLVKTGVAIIAGEVSTSAWVDLEDIVRNVILDIGYNSSDVGFDGATCGVMNIIGKQSVDIAQGVDRSKPEDQGAGDQGLMFGYASNETDVLMPAPITFSHQLVQRQAEARKSGLLPWLRPDAKSQVTCRYENGKVVGVDAIVLSTQHNPDVSYKDLREGVMELIVKHVIPAHLLHKDTQFHINPTGNFIIGGPVGDCGLTGRKIIVDTYGGMARHGGGAFSGKDPSKVDRSAAYAGRYVAKNIVAAGLAERCEIQVSYAIGVAQPTSISLNTFGTGKLSDDKIIKLVRDNFDLRPYAITTMLDLLHPMYQATAAYGHFGRTPVEMTVGDDTFTAFTWEKTDRADALRAAAGL.

His-16 provides a ligand contact to ATP. Residue Asp-18 participates in Mg(2+) binding. Glu-44 contacts K(+). Residues Glu-57 and Gln-100 each coordinate L-methionine. Residues 100–110 are flexible loop; the sequence is QSVDIAQGVDR. ATP-binding positions include 165 to 167, Asp-240, 246 to 247, Ala-263, and Lys-267; these read DAK and RK. Asp-240 is a binding site for L-methionine. Residue Lys-271 coordinates L-methionine.

The protein belongs to the AdoMet synthase family. As to quaternary structure, homotetramer; dimer of dimers. The cofactor is Mg(2+). Requires K(+) as cofactor.

It is found in the cytoplasm. It carries out the reaction L-methionine + ATP + H2O = S-adenosyl-L-methionine + phosphate + diphosphate. Its pathway is amino-acid biosynthesis; S-adenosyl-L-methionine biosynthesis; S-adenosyl-L-methionine from L-methionine: step 1/1. Catalyzes the formation of S-adenosylmethionine (AdoMet) from methionine and ATP. The overall synthetic reaction is composed of two sequential steps, AdoMet formation and the subsequent tripolyphosphate hydrolysis which occurs prior to release of AdoMet from the enzyme. The protein is S-adenosylmethionine synthase of Pseudomonas syringae pv. tomato (strain ATCC BAA-871 / DC3000).